A 299-amino-acid polypeptide reads, in one-letter code: ATP phosphoribosyltransferase (299 aa).

This sequence belongs to the ATP phosphoribosyltransferase family. Long subfamily. As to quaternary structure, equilibrium between an active dimeric form, an inactive hexameric form and higher aggregates. Interconversion between the various forms is largely reversible and is influenced by the natural substrates and inhibitors of the enzyme. Mg(2+) is required as a cofactor.

It is found in the cytoplasm. The catalysed reaction is 1-(5-phospho-beta-D-ribosyl)-ATP + diphosphate = 5-phospho-alpha-D-ribose 1-diphosphate + ATP. The protein operates within amino-acid biosynthesis; L-histidine biosynthesis; L-histidine from 5-phospho-alpha-D-ribose 1-diphosphate: step 1/9. With respect to regulation, feedback inhibited by histidine. Functionally, catalyzes the condensation of ATP and 5-phosphoribose 1-diphosphate to form N'-(5'-phosphoribosyl)-ATP (PR-ATP). Has a crucial role in the pathway because the rate of histidine biosynthesis seems to be controlled primarily by regulation of HisG enzymatic activity. The polypeptide is ATP phosphoribosyltransferase (Blochmanniella floridana).